The sequence spans 357 residues: Probable leucine aminopeptidase MCYG_04170 (357 aa).

Positions 1–15 are cleaved as a signal peptide; sequence MKVLAALALSALALA. Asn-76 carries N-linked (GlcNAc...) asparagine glycosylation. Zn(2+) contacts are provided by His-167 and Asp-185. A glycan (N-linked (GlcNAc...) asparagine) is linked at Asn-186. 2 residues coordinate Zn(2+): Glu-224 and Asp-251. Cys-291 and Cys-295 are disulfide-bonded. His-324 serves as a coordination point for Zn(2+).

It belongs to the peptidase M28 family. M28E subfamily. In terms of assembly, monomer. Zn(2+) is required as a cofactor.

The protein resides in the secreted. Its function is as follows. Probable extracellular aminopeptidase which contributes to pathogenicity. The chain is Probable leucine aminopeptidase MCYG_04170 from Arthroderma otae (strain ATCC MYA-4605 / CBS 113480) (Microsporum canis).